The chain runs to 775 residues: Endothelin-converting enzyme-like 1 (775 aa).

At 1 to 59 the chain is on the cytoplasmic side; that stretch reads MEPPYSLTAHYDEFQEVKYVSRCGAGGARGASLPPGFPLGAARSATGARSGLPRWNRRE. Residues 60–82 form a helical; Signal-anchor for type II membrane protein membrane-spanning segment; that stretch reads VCLLSGLVFAAGLCAILAAMLAL. Residues 83–775 are Lumenal-facing; it reads KYLGPVAAGG…MNPAHKCSVW (693 aa). The 678-residue stretch at 98 to 775 folds into the Peptidase M13 domain; it reads GCPERKAFAR…MNPAHKCSVW (678 aa). Intrachain disulfides connect C123-C760, C131-C720, C187-C441, and C649-C772. N-linked (GlcNAc...) asparagine glycosylation is found at N255 and N322. H612 contributes to the Zn(2+) binding site. Residue E613 is part of the active site. H616 is a binding site for Zn(2+). N656 is a glycosylation site (N-linked (GlcNAc...) asparagine). E672 contributes to the Zn(2+) binding site. The Proton donor role is filled by D676.

Belongs to the peptidase M13 family. Zn(2+) serves as cofactor. Post-translationally, N-glycosylated. As to expression, highly expressed in the CNS, in particular in putamen, spinal cord, medulla and subthalamic nucleus. A strong signal was also detected in uterine subepithelial cells and around renal blood vessels. Detected at lower levels in amygdala, caudate, thalamus, pancreas and skeletal muscle. Detected at very low levels in substantia nigra, cerebellum, cortex, corpus callosum and hippocampus.

It localises to the membrane. Its function is as follows. May contribute to the degradation of peptide hormones and be involved in the inactivation of neuronal peptides. The protein is Endothelin-converting enzyme-like 1 (ECEL1) of Homo sapiens (Human).